The primary structure comprises 143 residues: Nucleoside diphosphate kinase (143 aa).

Residues lysine 11, phenylalanine 59, arginine 87, threonine 93, arginine 104, and asparagine 114 each coordinate ATP. Catalysis depends on histidine 117, which acts as the Pros-phosphohistidine intermediate.

The protein belongs to the NDK family. As to quaternary structure, homotetramer. Mg(2+) serves as cofactor.

It is found in the cytoplasm. It catalyses the reaction a 2'-deoxyribonucleoside 5'-diphosphate + ATP = a 2'-deoxyribonucleoside 5'-triphosphate + ADP. The catalysed reaction is a ribonucleoside 5'-diphosphate + ATP = a ribonucleoside 5'-triphosphate + ADP. In terms of biological role, major role in the synthesis of nucleoside triphosphates other than ATP. The ATP gamma phosphate is transferred to the NDP beta phosphate via a ping-pong mechanism, using a phosphorylated active-site intermediate. The sequence is that of Nucleoside diphosphate kinase from Shewanella sp. (strain ANA-3).